Here is a 318-residue protein sequence, read N- to C-terminus: Acetyl-coenzyme A carboxylase carboxyl transferase subunit alpha (318 aa).

Residues 31–292 (DLIKEVSALE…KDAILRQLEL (262 aa)) form the CoA carboxyltransferase C-terminal domain.

This sequence belongs to the AccA family. In terms of assembly, acetyl-CoA carboxylase is a heterohexamer composed of biotin carboxyl carrier protein (AccB), biotin carboxylase (AccC) and two subunits each of ACCase subunit alpha (AccA) and ACCase subunit beta (AccD).

It localises to the cytoplasm. The catalysed reaction is N(6)-carboxybiotinyl-L-lysyl-[protein] + acetyl-CoA = N(6)-biotinyl-L-lysyl-[protein] + malonyl-CoA. It participates in lipid metabolism; malonyl-CoA biosynthesis; malonyl-CoA from acetyl-CoA: step 1/1. In terms of biological role, component of the acetyl coenzyme A carboxylase (ACC) complex. First, biotin carboxylase catalyzes the carboxylation of biotin on its carrier protein (BCCP) and then the CO(2) group is transferred by the carboxyltransferase to acetyl-CoA to form malonyl-CoA. This Hydrogenovibrio crunogenus (strain DSM 25203 / XCL-2) (Thiomicrospira crunogena) protein is Acetyl-coenzyme A carboxylase carboxyl transferase subunit alpha.